We begin with the raw amino-acid sequence, 583 residues long: Membrane protein insertase YidC (583 aa).

6 helical membrane-spanning segments follow: residues 5–25 (SVTG…FMSP), 341–361 (PFAE…VSNY), 362–382 (GLII…LSMA), 427–447 (IGGC…FYVF), 473–493 (FGFA…LMAV), and 520–540 (AMML…YLMF).

Belongs to the OXA1/ALB3/YidC family. Type 1 subfamily. In terms of assembly, interacts with the Sec translocase complex via SecD. Specifically interacts with transmembrane segments of nascent integral membrane proteins during membrane integration.

Its subcellular location is the cell inner membrane. Its function is as follows. Required for the insertion and/or proper folding and/or complex formation of integral membrane proteins into the membrane. Involved in integration of membrane proteins that insert both dependently and independently of the Sec translocase complex, as well as at least some lipoproteins. Aids folding of multispanning membrane proteins. The protein is Membrane protein insertase YidC of Pelodictyon phaeoclathratiforme (strain DSM 5477 / BU-1).